A 126-amino-acid polypeptide reads, in one-letter code: MNFPQNLKYTNEHEWIRVEGDIAYVGITDYAQEQLGDIVFVDIPTVGETLEAGETFGTIEVVKTISDLFLPLAGEILEQNEALEENPELVNKDPYGEGWLIKMKPADASAAEDLLDAEAYKAVVNG.

The region spanning 22-104 is the Lipoyl-binding domain; that stretch reads IAYVGITDYA…YGEGWLIKMK (83 aa). Lysine 63 is subject to N6-lipoyllysine.

The protein belongs to the GcvH family. In terms of assembly, the glycine cleavage system is composed of four proteins: P, T, L and H. Requires (R)-lipoate as cofactor.

The glycine cleavage system catalyzes the degradation of glycine. The H protein shuttles the methylamine group of glycine from the P protein to the T protein. The protein is Glycine cleavage system H protein of Bacteroides thetaiotaomicron (strain ATCC 29148 / DSM 2079 / JCM 5827 / CCUG 10774 / NCTC 10582 / VPI-5482 / E50).